Here is an 835-residue protein sequence, read N- to C-terminus: Telomere length regulation protein TEL2 homolog (835 aa).

Disordered stretches follow at residues 455–501 (SADC…LAPY) and 629–648 (LSHEVSSESRSTGTGQHSIR). A compositionally biased stretch (low complexity) spans 464–473 (ESSPSKSCPK). Basic and acidic residues predominate over residues 474–486 (AIEKSKMEAKADQ). A compositionally biased stretch (acidic residues) spans 488–499 (SDSELDSDDDLA). Residues 636–648 (ESRSTGTGQHSIR) are compositionally biased toward polar residues.

This sequence belongs to the TEL2 family.

Its subcellular location is the cytoplasm. It localises to the membrane. It is found in the nucleus. The protein resides in the chromosome. The protein localises to the telomere. Functionally, regulator of the DNA damage response (DDR). Part of the TTT complex that is required to stabilize protein levels of the phosphatidylinositol 3-kinase-related protein kinase (PIKK) family proteins. Promotes assembly, stabilizes and maintains the activity of TORC complexes, which regulate cell growth and survival in response to nutrient and hormonal signals. May be involved in telomere length regulation. The chain is Telomere length regulation protein TEL2 homolog (telo2) from Xenopus laevis (African clawed frog).